The primary structure comprises 633 residues: Threonine--tRNA ligase (633 aa).

The TGS domain occupies 1 to 61 (MINVYFSDNS…TEDCKFEVIT (61 aa)). Positions 242–533 (DHRKIGKELE…LIEHHSGKLP (292 aa)) are catalytic. Cysteine 333, histidine 384, and histidine 510 together coordinate Zn(2+).

This sequence belongs to the class-II aminoacyl-tRNA synthetase family. Homodimer. Zn(2+) is required as a cofactor.

The protein localises to the cytoplasm. It carries out the reaction tRNA(Thr) + L-threonine + ATP = L-threonyl-tRNA(Thr) + AMP + diphosphate + H(+). In terms of biological role, catalyzes the attachment of threonine to tRNA(Thr) in a two-step reaction: L-threonine is first activated by ATP to form Thr-AMP and then transferred to the acceptor end of tRNA(Thr). Also edits incorrectly charged L-seryl-tRNA(Thr). This Ehrlichia ruminantium (strain Gardel) protein is Threonine--tRNA ligase.